We begin with the raw amino-acid sequence, 974 residues long: MATFAVSGLNSISSISSFNNNFRSKNSNILLSRRRILLFSFRRRRRSFSVSSVASDQKQKTKDSSSDEGFTLDVFQPDSTSVLSSIKYHAEFTPSFSPEKFELPKAYYATAESVRDTLIINWNATYEFYEKMNVKQAYYLSMEFLQGRALLNAIGNLGLTGPYADALTKLGYSLEDVARQEPDAALGNGGLGRLASCFLDSMATLNYPAWGYGLRYQYGLFKQLITKDGQEEVAENWLEMGNPWEIVRNDISYPVKFYGKVIEGADGRKEWAGGEDITAVAYDVPIPGYKTKTTINLRLWTTKLAAEAFDLYAFNNGDHAKAYEAQKKAEKICYVLYPGDESLEGKTLRLKQQYTLCSASLQDIIARFEKRSGNAVNWDQFPEKVAVQMNDTHPTLCIPELLRILMDVKGLSWKQAWEITQRTVAYTNHTVLPEALEKWSFTLLGELLPRHVEIIAMIDEELLHTILAEYGTEDLDLLQEKLNQMRILDNVEIPSSVLELLIKAEESAADVEKAADEEQEEEGKDDSKDEETEAVKAETTNEEEETEVKKVEVEDSQAKIKRIFGPHPNKPQVVHMANLCVVSGHAVNGVAEIHSEIVKDEVFNEFYKLWPEKFQNKTNGVTPRRWLSFCNPELSEIITKWTGSDDWLVNTEKLAELRKFADNEELQSEWRKAKGNNKMKIVSLIKEKTGYVVSPDAMFDVQIKRIHEYKRQLLNIFGIVYRYKKMKEMSPEERKEKFVPRVCIFGGKAFATYVQAKRIVKFITDVGETVNHDPEIGDLLKVVFVPDYNVSVAEVLIPGSELSQHISTAGMEASGTSNMKFSMNGCLLIGTLDGANVEIREEVGEDNFFLFGAQAHEIAGLRKERAEGKFVPDPRFEEVKAFIRTGVFGTYNYEELMGSLEGNEGYGRADYFLVGKDFPDYIECQDKVDEAYRDQKKWTKMSILNTAGSFKFSSDRTIHQYARDIWRIEPVELP.

Residues 1–81 (MATFAVSGLN…LDVFQPDSTS (81 aa)) constitute a chloroplast transit peptide. Residues 509–551 (ADVEKAADEEQEEEGKDDSKDEETEAVKAETTNEEEETEVKKV) are disordered. A compositionally biased stretch (acidic residues) spans 517 to 532 (EEQEEEGKDDSKDEET). Lysine 820 carries the post-translational modification N6-(pyridoxal phosphate)lysine.

It belongs to the glycogen phosphorylase family. It depends on pyridoxal 5'-phosphate as a cofactor. In terms of tissue distribution, leaves.

It is found in the plastid. It localises to the chloroplast. The protein resides in the amyloplast. It carries out the reaction [(1-&gt;4)-alpha-D-glucosyl](n) + phosphate = [(1-&gt;4)-alpha-D-glucosyl](n-1) + alpha-D-glucose 1-phosphate. Its function is as follows. Phosphorylase is an important allosteric enzyme in carbohydrate metabolism. Enzymes from different sources differ in their regulatory mechanisms and in their natural substrates. However, all known phosphorylases share catalytic and structural properties. This Solanum tuberosum (Potato) protein is Alpha-1,4 glucan phosphorylase L-2 isozyme, chloroplastic/amyloplastic (STP-1).